The chain runs to 258 residues: Phosphoribosylaminoimidazole-succinocarboxamide synthase (258 aa).

The protein belongs to the SAICAR synthetase family.

The catalysed reaction is 5-amino-1-(5-phospho-D-ribosyl)imidazole-4-carboxylate + L-aspartate + ATP = (2S)-2-[5-amino-1-(5-phospho-beta-D-ribosyl)imidazole-4-carboxamido]succinate + ADP + phosphate + 2 H(+). It functions in the pathway purine metabolism; IMP biosynthesis via de novo pathway; 5-amino-1-(5-phospho-D-ribosyl)imidazole-4-carboxamide from 5-amino-1-(5-phospho-D-ribosyl)imidazole-4-carboxylate: step 1/2. The chain is Phosphoribosylaminoimidazole-succinocarboxamide synthase from Rhizorhabdus wittichii (strain DSM 6014 / CCUG 31198 / JCM 15750 / NBRC 105917 / EY 4224 / RW1) (Sphingomonas wittichii).